A 319-amino-acid polypeptide reads, in one-letter code: Putative antiporter CaxA (319 aa).

The next 10 membrane-spanning stretches (helical) occupy residues 3-23 (VATIFVLVGLVLLIWSADRFV), 38-58 (MIIGLTIVAMGSSAPEIMVSA), 81-101 (ILLVIGATALLKPIAVASMTI), 105-125 (FPLLILVTLLGYLFLADQSLT), 127-147 (AEGALFLGGFVLFLVLMVYWG), 175-195 (VWLVLGLALLLASSQLLVHGA), 208-228 (LIGLTIIAIGTSLPELAASLI), 250-270 (ILAVLGVGTIIAPGVIDAAAA), 275-292 (YVMMAATLALLLMSLRLG), and 297-317 (INRVEGCILLMAFIGYQYLLF).

Belongs to the Ca(2+):cation antiporter (CaCA) (TC 2.A.19) family.

The protein resides in the cell membrane. Confers modest Ca(2+) and Na(+) resistance. This Alkalimonas amylolytica protein is Putative antiporter CaxA (caxA).